Reading from the N-terminus, the 306-residue chain is MPFLELTLSCSEVTLPRFQNALDDVGALAVTMLDADADTSNERAILEPGVGEMPLWDRLTMTALFDGDSDALVVLAALEAFDPGLDWSQVAFRMVEDSDWERAWMDLFKPMQFGERTFIVPWNHALPEAADTPEAAVVRLDPGLAFGSGTHQTTALCLRWLDSLAGSGELQGRSVLDFGCGSGILAVAALKLGAAGAVGVDNDPQALLATADNAQRNGVDAQLTVYMPQDEPVQTYQVVVANILASALDALADTLAARVAPGGRIALSGILHGQEDDLLKRYAPWFDQLRCERDEDWMRIDGVRRG.

S-adenosyl-L-methionine contacts are provided by threonine 154, glycine 179, aspartate 201, and asparagine 242.

Belongs to the methyltransferase superfamily. PrmA family.

The protein resides in the cytoplasm. The enzyme catalyses L-lysyl-[protein] + 3 S-adenosyl-L-methionine = N(6),N(6),N(6)-trimethyl-L-lysyl-[protein] + 3 S-adenosyl-L-homocysteine + 3 H(+). Functionally, methylates ribosomal protein L11. In Xanthomonas euvesicatoria pv. vesicatoria (strain 85-10) (Xanthomonas campestris pv. vesicatoria), this protein is Ribosomal protein L11 methyltransferase.